A 293-amino-acid chain; its full sequence is Beta-lactamase (293 aa).

Positions 1–27 are cleaved as a signal peptide; the sequence is MRFTATVLSRVATGLALGLSMATASLA. Ser-74 acts as the Acyl-ester intermediate in catalysis. Substrate is bound at residue 238–240; the sequence is KSG.

This sequence belongs to the class-A beta-lactamase family.

It localises to the periplasm. The catalysed reaction is a beta-lactam + H2O = a substituted beta-amino acid. In terms of biological role, hydrolyzes beta-lactams antibiotics. Rates of hydrolysis relative to benzylpenicillin =100: ampicillin = 27, carbenicillin = 25, cloxacillin = 0, cephaloridine = 4. The protein is Beta-lactamase of Rhodobacter capsulatus (Rhodopseudomonas capsulata).